The sequence spans 316 residues: Zinc finger protein 367 (316 aa).

Residues 61–97 (VTLGPGSGSGAASPTRTSSSPAEADPLSCPEHLKDGI) form a disordered region. Over residues 70–82 (GAASPTRTSSSPA) the composition is skewed to low complexity. 2 C2H2-type zinc fingers span residues 121 to 143 (IRCNICNRVFPREKSLQAHKRTH) and 149 to 173 (YLCDYPDCGKAFVQSGQLKTHQRLH). Residues 234–294 (QTREQRSPVP…GGVVTARRRL (61 aa)) are disordered. The span at 255–278 (EDQEQQDPLDFLPSDEGEEEEQEE) shows a compositional bias: acidic residues. Residues 289–313 (TARRRLQEQRERLHGALALIELANN) are a coiled coil.

The protein belongs to the krueppel C2H2-type zinc-finger protein family.

It localises to the nucleus. Its function is as follows. Transcriptional activator. This Danio rerio (Zebrafish) protein is Zinc finger protein 367 (znf367).